Consider the following 477-residue polypeptide: Glutamate--tRNA ligase (477 aa).

Residues 8–18 (PSPTGTLHIGT) carry the 'HIGH' region motif. The 'KMSKS' region motif lies at 247–251 (KLSKR). Lys-250 is an ATP binding site.

Belongs to the class-I aminoacyl-tRNA synthetase family. Glutamate--tRNA ligase type 1 subfamily. In terms of assembly, monomer.

The protein resides in the cytoplasm. It carries out the reaction tRNA(Glu) + L-glutamate + ATP = L-glutamyl-tRNA(Glu) + AMP + diphosphate. Functionally, catalyzes the attachment of glutamate to tRNA(Glu) in a two-step reaction: glutamate is first activated by ATP to form Glu-AMP and then transferred to the acceptor end of tRNA(Glu). The polypeptide is Glutamate--tRNA ligase (Synechococcus sp. (strain CC9605)).